The following is a 337-amino-acid chain: Lipopolysaccharide 1,3-galactosyltransferase (337 aa).

Residues 33-38 (GIDKNF) and 130-131 (DA) each bind UDP. Residues Asp130 and Asp132 each coordinate Mg(2+). 2 short sequence motifs (DXD) span residues 130-132 (DAD) and 219-221 (DQD). His264 contacts Mg(2+). Residue 264–270 (HYIGPTK) coordinates UDP.

It belongs to the glycosyltransferase 8 family. It depends on Mg(2+) as a cofactor.

The catalysed reaction is UDP-alpha-D-galactose + [lipopolysaccharide] = UDP + 3-alpha-D-galactosyl-[lipopolysaccharide].. It participates in bacterial outer membrane biogenesis; LPS core biosynthesis. Inhibited in a competitive manner by closely related nonsubstrate lipopolysaccharides. Functionally, galactosyltransferase involved in the biosynthesis of the core oligosaccharide region of lipopolysaccharide (LPS). Catalyzes the addition of an alpha l,3-linked galactose (galactose I) to the first outer-core glucose (glucose I). Cannot use UDP-glucose. Activity probably does not require the branched galactose added by WaaB, but it is higher in the presence of this branched galactose. The chain is Lipopolysaccharide 1,3-galactosyltransferase from Salmonella typhimurium (strain LT2 / SGSC1412 / ATCC 700720).